The following is a 237-amino-acid chain: Glutathione S-transferase L1 (237 aa).

A GST N-terminal domain is found at Gly29–Ser110. Glutathione is bound by residues Cys39 to Pro40, Asn67 to Arg68, Lys81 to Val82, and Glu94 to Ser95. The GST C-terminal domain occupies Tyr112 to Tyr232.

The protein belongs to the GST superfamily. Lambda family.

Its subcellular location is the cytoplasm. It localises to the cytosol. The enzyme catalyses RX + glutathione = an S-substituted glutathione + a halide anion + H(+). Its function is as follows. Catalyzes the glutathione-dependent reduction of S-glutathionylquercetin to quercetin. In vitro, possesses glutathione-dependent thiol transferase activity toward 2-hydroxyethyl disulfide (HED). This Arabidopsis thaliana (Mouse-ear cress) protein is Glutathione S-transferase L1 (GSTL1).